Here is a 482-residue protein sequence, read N- to C-terminus: Glutamate--tRNA ligase (482 aa).

A 'HIGH' region motif is present at residues 10 to 20 (PSPTGFLHIGN). Residues 253–257 (KLSKR) carry the 'KMSKS' region motif. Lysine 256 lines the ATP pocket.

It belongs to the class-I aminoacyl-tRNA synthetase family. Glutamate--tRNA ligase type 1 subfamily. In terms of assembly, monomer.

It is found in the cytoplasm. The catalysed reaction is tRNA(Glu) + L-glutamate + ATP = L-glutamyl-tRNA(Glu) + AMP + diphosphate. Functionally, catalyzes the attachment of glutamate to tRNA(Glu) in a two-step reaction: glutamate is first activated by ATP to form Glu-AMP and then transferred to the acceptor end of tRNA(Glu). The polypeptide is Glutamate--tRNA ligase (Mesoplasma florum (strain ATCC 33453 / NBRC 100688 / NCTC 11704 / L1) (Acholeplasma florum)).